Here is a 478-residue protein sequence, read N- to C-terminus: Lipoprotein lipase (478 aa).

The first 27 residues, Met-1 to Ala-27, serve as a signal peptide directing secretion. The interaction with GPIHBP1 stretch occupies residues Lys-35–Thr-56. A disulfide bridge connects residues Cys-57 and Cys-70. Asn-73 carries N-linked (GlcNAc...) asparagine glycosylation. A 3'-nitrotyrosine modification is found at Tyr-124. Residue Ser-162 is the Nucleophile of the active site. Residue Asp-186 is the Charge relay system of the active site. Tyr-194 carries the post-translational modification 3'-nitrotyrosine. Positions 197, 200, 202, and 205 each coordinate Ca(2+). Cys-246 and Cys-269 form a disulfide bridge. The tract at residues Cys-246–Cys-269 is essential for determining substrate specificity. The Charge relay system role is filled by His-271. 2 disulfides stabilise this stretch: Cys-294/Cys-313 and Cys-305/Cys-308. In terms of domain architecture, PLAT spans Phe-344 to Lys-467. Tyr-346 carries the post-translational modification 3'-nitrotyrosine. Asn-389 is a glycosylation site (N-linked (GlcNAc...) asparagine). The tract at residues Trp-420–Trp-424 is important for interaction with lipoprotein particles. The segment at Lys-433–Lys-437 is important for heparin binding. The interval Ile-446–Asp-470 is interaction with GPIHBP1. Cys-448 and Cys-468 are disulfide-bonded.

It belongs to the AB hydrolase superfamily. Lipase family. As to quaternary structure, homodimer. Interacts with GPIHBP1 with 1:1 stoichiometry. Interacts with APOC2; the interaction activates LPL activity in the presence of lipids. Interaction with heparan sulfate proteoglycans is required to protect LPL against loss of activity. Associates with lipoprotein particles in blood plasma. Interacts with LMF1 and SEL1L; interaction with SEL1L is required to prevent aggregation of newly synthesized LPL in the endoplasmic reticulum (ER), and for normal export of LPL from the ER to the extracellular space. Interacts with SORL1; SORL1 acts as a sorting receptor, promoting LPL localization to endosomes and later to lysosomes, leading to degradation of newly synthesized LPL. Post-translationally, tyrosine nitration after lipopolysaccharide (LPS) challenge down-regulates the lipase activity.

The protein resides in the cell membrane. It localises to the secreted. The protein localises to the extracellular space. It is found in the extracellular matrix. It carries out the reaction a triacylglycerol + H2O = a diacylglycerol + a fatty acid + H(+). The catalysed reaction is a 1,2-diacyl-sn-glycero-3-phosphocholine + H2O = a 2-acyl-sn-glycero-3-phosphocholine + a fatty acid + H(+). The enzyme catalyses 1,2,3-tri-(9Z-octadecenoyl)-glycerol + H2O = di-(9Z)-octadecenoylglycerol + (9Z)-octadecenoate + H(+). It catalyses the reaction 1,2-di-(9Z-octadecenoyl)-sn-glycero-3-phosphocholine + H2O = (9Z-octadecenoyl)-sn-glycero-3-phosphocholine + (9Z)-octadecenoate + H(+). It carries out the reaction 1,2,3-tributanoylglycerol + H2O = dibutanoylglycerol + butanoate + H(+). The catalysed reaction is 1,2-dihexadecanoyl-sn-glycero-3-phosphocholine + H2O = hexadecanoyl-sn-glycero-3-phosphocholine + hexadecanoate + H(+). Its activity is regulated as follows. The apolipoprotein APOC2 acts as a coactivator of LPL activity. Ca(2+) binding promotes protein stability and formation of the active homodimer. Interaction with GPIHBP1 protects LPL against inactivation by ANGPTL4. Functionally, key enzyme in triglyceride metabolism. Catalyzes the hydrolysis of triglycerides from circulating chylomicrons and very low density lipoproteins (VLDL), and thereby plays an important role in lipid clearance from the blood stream, lipid utilization and storage. Although it has both phospholipase and triglyceride lipase activities it is primarily a triglyceride lipase with low but detectable phospholipase activity. Mediates margination of triglyceride-rich lipoprotein particles in capillaries. Recruited to its site of action on the luminal surface of vascular endothelium by binding to GPIHBP1 and cell surface heparan sulfate proteoglycans. This Ovis aries (Sheep) protein is Lipoprotein lipase (LPL).